We begin with the raw amino-acid sequence, 537 residues long: Ataxin-10 homolog (537 aa).

It belongs to the ataxin-10 family.

It localises to the cytoplasm. Functionally, may play a role in the regulation of cytokinesis. This is Ataxin-10 homolog (CTR86) from Kluyveromyces lactis (strain ATCC 8585 / CBS 2359 / DSM 70799 / NBRC 1267 / NRRL Y-1140 / WM37) (Yeast).